The chain runs to 261 residues: Ribonuclease PH (261 aa).

Phosphate-binding positions include Arg87 and 125 to 127; that span reads GTR.

This sequence belongs to the RNase PH family. Homohexameric ring arranged as a trimer of dimers.

It carries out the reaction tRNA(n+1) + phosphate = tRNA(n) + a ribonucleoside 5'-diphosphate. In terms of biological role, phosphorolytic 3'-5' exoribonuclease that plays an important role in tRNA 3'-end maturation. Removes nucleotide residues following the 3'-CCA terminus of tRNAs; can also add nucleotides to the ends of RNA molecules by using nucleoside diphosphates as substrates, but this may not be physiologically important. Probably plays a role in initiation of 16S rRNA degradation (leading to ribosome degradation) during starvation. The protein is Ribonuclease PH of Thermoanaerobacter pseudethanolicus (strain ATCC 33223 / 39E) (Clostridium thermohydrosulfuricum).